A 221-amino-acid polypeptide reads, in one-letter code: Placenta growth factor (221 aa).

The N-terminal stretch at Met-1 to Ala-18 is a signal peptide. A glycan (N-linked (GlcNAc...) asparagine) is linked at Asn-33. 3 disulfide bridges follow: Cys-52-Cys-94, Cys-83-Cys-128, and Cys-87-Cys-130. Residue Asn-101 is glycosylated (N-linked (GlcNAc...) asparagine). Residues Gln-175–Arg-221 form a disordered region. Residues His-192 to Lys-203 show a composition bias toward basic residues. A heparin-binding region spans residues Pro-193 to Arg-213. Over residues Pro-204–Arg-221 the composition is skewed to basic and acidic residues.

The protein belongs to the PDGF/VEGF growth factor family. Antiparallel homodimer; disulfide-linked. Also found as heterodimer with VEGFA/VEGF. Isoform PlGF-3 is found both as homodimer and as monomer. N-glycosylated. In terms of tissue distribution, while the three isoforms are present in most placental tissues, PlGF-2 is specific to early (8 week) placenta and only PlGF-1 is found in the colon and mammary carcinomas.

Its subcellular location is the secreted. Growth factor active in angiogenesis and endothelial cell growth, stimulating their proliferation and migration. It binds to the receptor FLT1/VEGFR-1. Isoform PlGF-2 binds NRP1/neuropilin-1 and NRP2/neuropilin-2 in a heparin-dependent manner. Also promotes cell tumor growth. The polypeptide is Placenta growth factor (PGF) (Homo sapiens (Human)).